A 201-amino-acid chain; its full sequence is Small ribosomal subunit protein uS4 (201 aa).

Residues 26 to 48 are disordered; sequence LSKKNYPPGQHGNSRKRKTSEYG. Residues 92 to 155 form the S4 RNA-binding domain; sequence GRLDNVVFRL…KSLEVIANSL (64 aa).

This sequence belongs to the universal ribosomal protein uS4 family. In terms of assembly, part of the 30S ribosomal subunit. Contacts protein S5. The interaction surface between S4 and S5 is involved in control of translational fidelity.

Functionally, one of the primary rRNA binding proteins, it binds directly to 16S rRNA where it nucleates assembly of the body of the 30S subunit. Its function is as follows. With S5 and S12 plays an important role in translational accuracy. The chain is Small ribosomal subunit protein uS4 from Bacteroides thetaiotaomicron (strain ATCC 29148 / DSM 2079 / JCM 5827 / CCUG 10774 / NCTC 10582 / VPI-5482 / E50).